The primary structure comprises 497 residues: Probable cytosol aminopeptidase (497 aa).

Residues K265 and D270 each contribute to the Mn(2+) site. Residue K277 is part of the active site. 3 residues coordinate Mn(2+): D288, D347, and E349. The active site involves R351.

Belongs to the peptidase M17 family. It depends on Mn(2+) as a cofactor.

It localises to the cytoplasm. The enzyme catalyses Release of an N-terminal amino acid, Xaa-|-Yaa-, in which Xaa is preferably Leu, but may be other amino acids including Pro although not Arg or Lys, and Yaa may be Pro. Amino acid amides and methyl esters are also readily hydrolyzed, but rates on arylamides are exceedingly low.. It carries out the reaction Release of an N-terminal amino acid, preferentially leucine, but not glutamic or aspartic acids.. In terms of biological role, presumably involved in the processing and regular turnover of intracellular proteins. Catalyzes the removal of unsubstituted N-terminal amino acids from various peptides. This Geobacillus sp. (strain WCH70) protein is Probable cytosol aminopeptidase.